A 546-amino-acid polypeptide reads, in one-letter code: Amidophosphoribosyltransferase (546 aa).

Over residues 1–26 (MSAPQQQQQSQQKQQQHVRVVEQQQV) the composition is skewed to low complexity. The tract at residues 1 to 39 (MSAPQQQQQSQQKQQQHVRVVEQQQVEPAEAVTSSMESE) is disordered. Positions 1–53 (MSAPQQQQQSQQKQQQHVRVVEQQQVEPAEAVTSSMESESISASKELTGLTHE) are excised as a propeptide. The active-site Nucleophile is the Cys54. The Glutamine amidotransferase type-2 domain maps to 54 to 302 (CGVFGAIACG…PGEIVELSRS (249 aa)). Ser113 is subject to Phosphoserine. Thr114 is subject to Phosphothreonine. A Phosphoserine modification is found at Ser120. [4Fe-4S] cluster is bound at residue Cys321. 3 residues coordinate Mg(2+): Ser368, Asp430, and Asp431. Residues Cys467, Cys528, and Cys531 each contribute to the [4Fe-4S] cluster site.

It in the C-terminal section; belongs to the purine/pyrimidine phosphoribosyltransferase family. The cofactor is Mg(2+). [4Fe-4S] cluster serves as cofactor.

The catalysed reaction is 5-phospho-beta-D-ribosylamine + L-glutamate + diphosphate = 5-phospho-alpha-D-ribose 1-diphosphate + L-glutamine + H2O. The protein operates within purine metabolism; IMP biosynthesis via de novo pathway; N(1)-(5-phospho-D-ribosyl)glycinamide from 5-phospho-alpha-D-ribose 1-diphosphate: step 1/2. Functionally, involved in the first step (and regulatory point) of the de novo biosynthesis of purine nucleotides, where it catalyzes the transfer of glutamine amide to 5-phospho-alpha-D-ribose 1-diphosphate. The protein is Amidophosphoribosyltransferase (Prat) of Drosophila melanogaster (Fruit fly).